Reading from the N-terminus, the 423-residue chain is Adenylosuccinate synthetase (423 aa).

The active-site Proton acceptor is the aspartate 12. Aspartate 12 and glycine 39 together coordinate Mg(2+). IMP-binding positions include 37–40 (NAGH), threonine 129, arginine 143, asparagine 221, threonine 236, and arginine 300. 39 to 41 (GHS) is a binding site for GTP. The Proton donor role is filled by histidine 40. 296–302 (VSTGRKR) contacts substrate. GTP-binding positions include arginine 302, 328–330 (KLD), and 412–414 (GTG).

Belongs to the adenylosuccinate synthetase family. In terms of assembly, homodimer. The cofactor is Mg(2+).

The protein resides in the cytoplasm. The catalysed reaction is IMP + L-aspartate + GTP = N(6)-(1,2-dicarboxyethyl)-AMP + GDP + phosphate + 2 H(+). Its pathway is purine metabolism; AMP biosynthesis via de novo pathway; AMP from IMP: step 1/2. In terms of biological role, plays an important role in the de novo pathway and in the salvage pathway of purine nucleotide biosynthesis. Catalyzes the first committed step in the biosynthesis of AMP from IMP. This chain is Adenylosuccinate synthetase, found in Pyricularia oryzae (strain 70-15 / ATCC MYA-4617 / FGSC 8958) (Rice blast fungus).